Reading from the N-terminus, the 1151-residue chain is Importin beta (1151 aa).

HEAT repeat units follow at residues methionine 1–glutamate 36, proline 37–asparagine 82, proline 83–phenylalanine 132, proline 133–glycine 175, glycine 176–isoleucine 222, proline 223–lysine 269, proline 270–lysine 316, alanine 317–phenylalanine 377, proline 378–lysine 416, glutamate 417–alanine 453, proline 454–lysine 495, alanine 496–aspartate 540, phenylalanine 541–leucine 593, proline 594–phenylalanine 642, proline 643–threonine 704, proline 705–serine 756, proline 757–glutamate 811, threonine 812–aspartate 880, leucine 881–serine 932, proline 933–aspartate 978, proline 979–phenylalanine 1027, proline 1028–aspartate 1074, proline 1075–glutamine 1120, and isoleucine 1121–glutamine 1151.

Belongs to the importin beta family.

It is found in the nucleus intermembrane space. The protein resides in the cytoplasm. The protein localises to the nucleus. In terms of biological role, functions in nuclear protein import as nuclear transport receptor. Involved in encystation process. Constitutive expression enhances cyst production and increases transcription of endogenous genes involved in encystation. Level of mRNA of the transcriptional factor myb1-like protein increases in early stages of the encystation process followed by increased mRNAs of the cyst wall proteins cwp1-3. In Giardia intestinalis (strain ATCC 50803 / WB clone C6) (Giardia lamblia), this protein is Importin beta.